The chain runs to 260 residues: UPF0246 protein APJL_0596 (260 aa).

The protein belongs to the UPF0246 family.

This is UPF0246 protein APJL_0596 from Actinobacillus pleuropneumoniae serotype 3 (strain JL03).